Reading from the N-terminus, the 360-residue chain is Phenylalanine--tRNA ligase alpha subunit (360 aa).

Glu260 lines the Mg(2+) pocket.

Belongs to the class-II aminoacyl-tRNA synthetase family. Phe-tRNA synthetase alpha subunit type 1 subfamily. Tetramer of two alpha and two beta subunits. The cofactor is Mg(2+).

The protein resides in the cytoplasm. It carries out the reaction tRNA(Phe) + L-phenylalanine + ATP = L-phenylalanyl-tRNA(Phe) + AMP + diphosphate + H(+). This is Phenylalanine--tRNA ligase alpha subunit from Sinorhizobium medicae (strain WSM419) (Ensifer medicae).